Reading from the N-terminus, the 167-residue chain is Pathogenesis-related protein PR-1 type (167 aa).

An N-terminal signal peptide occupies residues 1 to 29; it reads MAHNHWCNLFSVALVCVVALVMVQYSVAQ. The SCP domain maps to 36-155; it reads VDAHNAARSA…NGAWFITCNY (120 aa). 3 disulfides stabilise this stretch: Cys72–Cys144, Cys117–Cys123, and Cys139–Cys153.

It belongs to the CRISP family.

In terms of biological role, probably involved in the defense reaction of plants against pathogens. The chain is Pathogenesis-related protein PR-1 type from Sambucus nigra (European elder).